A 442-amino-acid chain; its full sequence is Vacuolar zinc transporter ZRC1 (442 aa).

The Cytoplasmic segment spans residues 1–8 (MITGKELR). The chain crosses the membrane as a helical span at residues 9–29 (IISLLTLDTVFFLLEITIGYM). At 30-32 (SHS) the chain is on the vacuolar side. The helical transmembrane segment at 33–53 (LALIADSFHMLNDIISLLVAL) threads the bilayer. Residues 54-75 (WAVDVAKNRGPDAKYTYGWKRA) are Cytoplasmic-facing. A helical membrane pass occupies residues 76-96 (EILGALINAVFLIALCFSIMI). Residues 97-112 (EALQRLIEPQEIQNPR) lie on the Vacuolar side of the membrane. Residues 113 to 133 (LVLYVGVAGLISNVVGLFLFH) form a helical membrane-spanning segment. Over 134–235 (DHGSDSLHSH…GHRSLNMHGV (102 aa)) the chain is Cytoplasmic. Short sequence motifs (histidine repeat) lie at residues 141–145 (HSHSH), 163–167 (HSHSH), and 216–220 (HDHSH). Disordered regions lie at residues 141-170 (HSHS…HASL) and 208-227 (QPLL…KPGH). Over residues 149–170 (ESGNNDLDIESNATHSHSHASL) the composition is skewed to polar residues. Over residues 212–224 (NHDDHDHSHESKK) the composition is skewed to basic and acidic residues. Residues 236–256 (FLHVLGDALGNIGVIAAALFI) form a helical membrane-spanning segment. The Vacuolar portion of the chain corresponds to 257–265 (WKTEYSWRY). Residues 266–286 (YSDPIVSLIITIIIFSSALPL) traverse the membrane as a helical segment. At 287-442 (SRRASRILLQ…AVNCNTSNCL (156 aa)) the chain is on the cytoplasmic side. A Glycyl lysine isopeptide (Lys-Gly) (interchain with G-Cter in ubiquitin) cross-link involves residue K357. Phosphoserine is present on residues S387, S393, and S397. The tract at residues 391–419 (GGSPSSSQEAFDSHGNTEHGRKKRSPTAY) is disordered.

The protein belongs to the cation diffusion facilitator (CDF) transporter (TC 2.A.4) family. SLC30A subfamily.

Its subcellular location is the vacuole membrane. The catalysed reaction is Zn(2+)(in) = Zn(2+)(out). Functionally, vacuolar transporter that regulates zinc homeostasis by mediating zinc transport and storage into the vacuole. ZRC1 senses zinc availability in the cytosol, which might be performed through the histidine repeat motifs, and transports zinc from the cytosol to the vacuole if zinc in cytosol is abundant, conferring resistance to zinc toxicity. Plays a role in resistance to zinc shock resulting from sudden influx of zinc into cytoplasm when ZRT1 and ZRT2 are induced in response to zinc depletion. The sequence is that of Vacuolar zinc transporter ZRC1 from Saccharomyces cerevisiae (strain ATCC 204508 / S288c) (Baker's yeast).